We begin with the raw amino-acid sequence, 423 residues long: Glucose-1-phosphate adenylyltransferase 1 (423 aa).

Residues Tyr111, Gly176, 191 to 192 (EK), and Ser209 contribute to the alpha-D-glucose 1-phosphate site.

This sequence belongs to the bacterial/plant glucose-1-phosphate adenylyltransferase family. In terms of assembly, homotetramer.

The enzyme catalyses alpha-D-glucose 1-phosphate + ATP + H(+) = ADP-alpha-D-glucose + diphosphate. Its pathway is glycan biosynthesis; glycogen biosynthesis. In terms of biological role, involved in the biosynthesis of ADP-glucose, a building block required for the elongation reactions to produce glycogen. Catalyzes the reaction between ATP and alpha-D-glucose 1-phosphate (G1P) to produce pyrophosphate and ADP-Glc. The protein is Glucose-1-phosphate adenylyltransferase 1 of Alkalilimnicola ehrlichii (strain ATCC BAA-1101 / DSM 17681 / MLHE-1).